We begin with the raw amino-acid sequence, 491 residues long: Peptidyl-prolyl isomerase CWC27 (491 aa).

In terms of domain architecture, PPIase cyclophilin-type spans 11 to 167 (TNGKVIIDTT…IPPKIRRIHI (157 aa)). Composition is skewed to basic and acidic residues over residues 186 to 202 (AQQK…EQRE), 268 to 298 (DLGK…REKA), and 306 to 316 (AEIKRMEEDLR). Disordered regions lie at residues 186–427 (AQQK…IEVD) and 464–491 (RDLL…GRNR). Residues 277–327 (ASEEKKAVDLKNIRAQHEREKAGGSAARQAEIKRMEEDLRRLKKRSGSVSD) adopt a coiled-coil conformation. A compositionally biased stretch (low complexity) spans 323-333 (GSVSDSESDSS). Over residues 352–367 (ASKRGRAAMKAGNKRG) the composition is skewed to basic residues. Acidic residues-rich tracts occupy residues 391 to 406 (DEPE…EGEA) and 418 to 427 (AEEEGGIEVD). A compositionally biased stretch (basic residues) spans 482–491 (RTVRNSGRNR).

It belongs to the cyclophilin-type PPIase family. CWC27 subfamily. As to quaternary structure, associated with the spliceosome.

The protein resides in the cytoplasm. It localises to the nucleus. It carries out the reaction [protein]-peptidylproline (omega=180) = [protein]-peptidylproline (omega=0). PPIases accelerate the folding of proteins. It catalyzes the cis-trans isomerization of proline imidic peptide bonds in oligopeptides. Involved in pre-mRNA splicing. The chain is Peptidyl-prolyl isomerase CWC27 (CWC27) from Cryptococcus neoformans var. neoformans serotype D (strain B-3501A) (Filobasidiella neoformans).